Here is a 564-residue protein sequence, read N- to C-terminus: Ovochymase-2 (564 aa).

A signal peptide spans 1–22 (MLISRNKLILLLGIVFFERGKS). Residues 23–51 (ATLSLPKAPSCGQSLVKVQPWNYFNIFSR) constitute a propeptide, activation peptide. A Peptidase S1 domain is found at 52-299 (ILGGSQVEKG…VLPWIHEHIQ (248 aa)). Cys-77 and Cys-93 are joined by a disulfide. His-92 functions as the Charge relay system in the catalytic mechanism. Asn-104 carries N-linked (GlcNAc...) asparagine glycosylation. Ca(2+) is bound at residue Glu-119. Asp-142 (charge relay system) is an active-site residue. Intrachain disulfides connect Cys-176/Cys-246, Cys-207/Cys-225, Cys-236/Cys-265, Cys-311/Cys-341, and Cys-365/Cys-384. Residue Ser-240 is the Charge relay system of the active site. CUB domains follow at residues 311 to 421 (CSEQ…YKAL) and 431 to 543 (CSYL…VSFI). N-linked (GlcNAc...) asparagine glycosylation is found at Asn-415 and Asn-451. Disulfide bonds link Cys-431–Cys-458 and Cys-485–Cys-506. An N-linked (GlcNAc...) asparagine glycan is attached at Asn-530.

The protein belongs to the peptidase S1 family.

It localises to the secreted. Its function is as follows. May be required for sperm ADAM3 processing and consequential sperm fertilizing ability. In vitro, has an endopeptidase activity. The sequence is that of Ovochymase-2 from Homo sapiens (Human).